Here is a 247-residue protein sequence, read N- to C-terminus: ATP synthase subunit a, chloroplastic (247 aa).

The next 5 helical transmembrane spans lie at 38 to 58 (QVLITSWVVIAILLASATLAV), 95 to 115 (VPFIGTMFLFIFVSNWSGALL), 134 to 154 (INTTVALALLTSVAYFYAGLS), 199 to 219 (LVVVVLVSLVPSVVPIPVMFL), and 220 to 240 (GLFTSGIQALIFATLAAAYIG).

It belongs to the ATPase A chain family. F-type ATPases have 2 components, CF(1) - the catalytic core - and CF(0) - the membrane proton channel. CF(1) has five subunits: alpha(3), beta(3), gamma(1), delta(1), epsilon(1). CF(0) has four main subunits: a, b, b' and c.

The protein resides in the plastid. The protein localises to the chloroplast thylakoid membrane. In terms of biological role, key component of the proton channel; it plays a direct role in the translocation of protons across the membrane. This chain is ATP synthase subunit a, chloroplastic, found in Lactuca sativa (Garden lettuce).